The sequence spans 172 residues: MNHCIQFSPQSLQRWLILPCYDLKLPIWANTTEFCPHGPRRASQDPQLLAWLPDQSLEVSLELYDWNSMTFTLFLETVEPVAVESEGSGIFSFVWQQLIFPAEARWCFSWAQDCGLDGSFPGSAHTEPFGKAAAGQGSVAGKEAKKAGPGFHRQLLYLQFQKRCLFNYPELL.

This is an uncharacterized protein from Homo sapiens (Human).